We begin with the raw amino-acid sequence, 192 residues long: uncharacterized protein (192 aa).

6 consecutive transmembrane segments (helical) span residues V5–L22, F42–Y61, L66–L88, W101–L118, L122–L139, and A159–F181.

The protein resides in the cell membrane. This is an uncharacterized protein from Treponema pallidum (strain Nichols).